We begin with the raw amino-acid sequence, 89 residues long: Small ribosomal subunit protein uS15 (89 aa).

This sequence belongs to the universal ribosomal protein uS15 family. As to quaternary structure, part of the 30S ribosomal subunit. Forms a bridge to the 50S subunit in the 70S ribosome, contacting the 23S rRNA.

One of the primary rRNA binding proteins, it binds directly to 16S rRNA where it helps nucleate assembly of the platform of the 30S subunit by binding and bridging several RNA helices of the 16S rRNA. Its function is as follows. Forms an intersubunit bridge (bridge B4) with the 23S rRNA of the 50S subunit in the ribosome. This Bifidobacterium longum subsp. infantis (strain ATCC 15697 / DSM 20088 / JCM 1222 / NCTC 11817 / S12) protein is Small ribosomal subunit protein uS15.